The chain runs to 92 residues: Small ribosomal subunit protein uS19 (92 aa).

The disordered stretch occupies residues 1–27 (MARSIKKGPFADDHLKKKVEAQSGSEK). The span at 9 to 27 (PFADDHLKKKVEAQSGSEK) shows a compositional bias: basic and acidic residues.

The protein belongs to the universal ribosomal protein uS19 family.

In terms of biological role, protein S19 forms a complex with S13 that binds strongly to the 16S ribosomal RNA. This Staphylococcus saprophyticus subsp. saprophyticus (strain ATCC 15305 / DSM 20229 / NCIMB 8711 / NCTC 7292 / S-41) protein is Small ribosomal subunit protein uS19.